We begin with the raw amino-acid sequence, 559 residues long: 5'-AMP-activated protein kinase catalytic subunit alpha-1 (559 aa).

Positions 27–279 constitute a Protein kinase domain; the sequence is YILGDTLGVG…IKDIREHEWF (253 aa). Threonine 32 is modified (phosphothreonine). Residues 33-41 and lysine 56 each bind ATP; that span reads LGVGTFGKV. The active-site Proton acceptor is the aspartate 150. Position 183 is a phosphothreonine; by LKB1 and CaMKK2 (threonine 183). A phosphothreonine mark is found at threonine 269 and threonine 355. Residues 302–381 are AIS; that stretch reads EALKEVCEKF…PERVPFLVAE (80 aa). Serine 356 is subject to Phosphoserine. A Phosphoserine; by ULK1 modification is found at serine 360. Threonine 368 is subject to Phosphothreonine; by ULK1. Residue threonine 382 is modified to Phosphothreonine. Phosphoserine is present on residues serine 397, serine 467, and serine 486. The span at 485 to 505 shows a compositional bias: polar residues; sequence KSGTATPQRSGSVSNYRSCQR. The disordered stretch occupies residues 485-536; it reads KSGTATPQRSGSVSNYRSCQRSDSDAEAQGKSSEVSLTSSVTSLDSSPVDLT. A phosphothreonine mark is found at threonine 488 and threonine 490. 4 positions are modified to phosphoserine: serine 496, serine 508, serine 524, and serine 527. The span at 516–535 shows a compositional bias: low complexity; the sequence is SSEVSLTSSVTSLDSSPVDL.

This sequence belongs to the protein kinase superfamily. CAMK Ser/Thr protein kinase family. SNF1 subfamily. AMPK is a heterotrimer of an alpha catalytic subunit (PRKAA1 or PRKAA2), a beta (PRKAB1 or PRKAB2) and a gamma non-catalytic subunits (PRKAG1, PRKAG2 or PRKAG3). Interacts with FNIP1 and FNIP2. In terms of assembly, (Microbial infection) Interacts with Dengue type 2 virus non-structural protein 1; this interaction promotes the AMPK/ERK/mTOR signaling pathway to induce autophagy. The cofactor is Mg(2+). In terms of processing, ubiquitinated. Phosphorylated at Thr-183 by STK11/LKB1 in complex with STE20-related adapter-alpha (STRADA) pseudo kinase and CAB39. Also phosphorylated at Thr-183 by CAMKK2; triggered by a rise in intracellular calcium ions, without detectable changes in the AMP/ATP ratio. CAMKK1 can also phosphorylate Thr-183, but at a much lower level. Dephosphorylated by protein phosphatase 2A and 2C (PP2A and PP2C). Phosphorylated by ULK1 and ULK2; leading to negatively regulate AMPK activity and suggesting the existence of a regulatory feedback loop between ULK1, ULK2 and AMPK. Dephosphorylated by PPM1A and PPM1B. Post-translationally, glycosylated; O-GlcNAcylated by OGT, promoting the AMP-activated protein kinase (AMPK) activity.

It is found in the cytoplasm. It localises to the nucleus. The catalysed reaction is L-seryl-[protein] + ATP = O-phospho-L-seryl-[protein] + ADP + H(+). It catalyses the reaction L-threonyl-[protein] + ATP = O-phospho-L-threonyl-[protein] + ADP + H(+). The enzyme catalyses L-seryl-[acetyl-CoA carboxylase] + ATP = O-phospho-L-seryl-[acetyl-CoA carboxylase] + ADP + H(+). It carries out the reaction L-seryl-[3-hydroxy-3-methylglutaryl-coenzyme A reductase] + ATP = O-phospho-L-seryl-[3-hydroxy-3-methylglutaryl-coenzyme A reductase] + ADP + H(+). The catalysed reaction is L-seryl-[tau protein] + ATP = O-phospho-L-seryl-[tau protein] + ADP + H(+). It catalyses the reaction L-threonyl-[tau protein] + ATP = O-phospho-L-threonyl-[tau protein] + ADP + H(+). Its activity is regulated as follows. Activated by phosphorylation on Thr-183. Binding of AMP to non-catalytic gamma subunit (PRKAG1, PRKAG2 or PRKAG3) results in allosteric activation, inducing phosphorylation on Thr-183. AMP-binding to gamma subunit also sustains activity by preventing dephosphorylation of Thr-183. ADP also stimulates Thr-183 phosphorylation, without stimulating already phosphorylated AMPK. ATP promotes dephosphorylation of Thr-183, rendering the enzyme inactive. Under physiological conditions AMPK mainly exists in its inactive form in complex with ATP, which is much more abundant than AMP. AMPK is activated by antihyperglycemic drug metformin, a drug prescribed to patients with type 2 diabetes: in vivo, metformin seems to mainly inhibit liver gluconeogenesis. However, metformin can be used to activate AMPK in muscle and other cells in culture or ex vivo. Selectively inhibited by compound C (6-[4-(2-Piperidin-1-yl-ethoxy)-phenyl)]-3-pyridin-4-yl-pyyrazolo[1,5-a] pyrimidine. Activated by resveratrol, a natural polyphenol present in red wine, and S17834, a synthetic polyphenol. Functionally, catalytic subunit of AMP-activated protein kinase (AMPK), an energy sensor protein kinase that plays a key role in regulating cellular energy metabolism. In response to reduction of intracellular ATP levels, AMPK activates energy-producing pathways and inhibits energy-consuming processes: inhibits protein, carbohydrate and lipid biosynthesis, as well as cell growth and proliferation. AMPK acts via direct phosphorylation of metabolic enzymes, and by longer-term effects via phosphorylation of transcription regulators. Regulates lipid synthesis by phosphorylating and inactivating lipid metabolic enzymes such as ACACA, ACACB, GYS1, HMGCR and LIPE; regulates fatty acid and cholesterol synthesis by phosphorylating acetyl-CoA carboxylase (ACACA and ACACB) and hormone-sensitive lipase (LIPE) enzymes, respectively. Promotes lipolysis of lipid droplets by mediating phosphorylation of isoform 1 of CHKA (CHKalpha2). Regulates insulin-signaling and glycolysis by phosphorylating IRS1, PFKFB2 and PFKFB3. AMPK stimulates glucose uptake in muscle by increasing the translocation of the glucose transporter SLC2A4/GLUT4 to the plasma membrane, possibly by mediating phosphorylation of TBC1D4/AS160. Regulates transcription and chromatin structure by phosphorylating transcription regulators involved in energy metabolism such as CRTC2/TORC2, FOXO3, histone H2B, HDAC5, MEF2C, MLXIPL/ChREBP, EP300, HNF4A, p53/TP53, SREBF1, SREBF2 and PPARGC1A. Acts as a key regulator of glucose homeostasis in liver by phosphorylating CRTC2/TORC2, leading to CRTC2/TORC2 sequestration in the cytoplasm. In response to stress, phosphorylates 'Ser-36' of histone H2B (H2BS36ph), leading to promote transcription. Acts as a key regulator of cell growth and proliferation by phosphorylating FNIP1, TSC2, RPTOR, WDR24 and ATG1/ULK1: in response to nutrient limitation, negatively regulates the mTORC1 complex by phosphorylating RPTOR component of the mTORC1 complex and by phosphorylating and activating TSC2. Also phosphorylates and inhibits GATOR2 subunit WDR24 in response to nutrient limitation, leading to suppress glucose-mediated mTORC1 activation. In response to energetic stress, phosphorylates FNIP1, inactivating the non-canonical mTORC1 signaling, thereby promoting nuclear translocation of TFEB and TFE3, and inducing transcription of lysosomal or autophagy genes. In response to nutrient limitation, promotes autophagy by phosphorylating and activating ATG1/ULK1. In that process, it also activates WDR45/WIPI4. Phosphorylates CASP6, thereby preventing its autoprocessing and subsequent activation. In response to nutrient limitation, phosphorylates transcription factor FOXO3 promoting FOXO3 mitochondrial import. Also acts as a regulator of cellular polarity by remodeling the actin cytoskeleton; probably by indirectly activating myosin. AMPK also acts as a regulator of circadian rhythm by mediating phosphorylation of CRY1, leading to destabilize it. May regulate the Wnt signaling pathway by phosphorylating CTNNB1, leading to stabilize it. Also has tau-protein kinase activity: in response to amyloid beta A4 protein (APP) exposure, activated by CAMKK2, leading to phosphorylation of MAPT/TAU; however the relevance of such data remains unclear in vivo. Also phosphorylates CFTR, EEF2K, KLC1, NOS3 and SLC12A1. Regulates hepatic lipogenesis. Activated via SIRT3, represses sterol regulatory element-binding protein (SREBP) transcriptional activities and ATP-consuming lipogenesis to restore cellular energy balance. Upon stress, regulates mitochondrial fragmentation through phosphorylation of MTFR1L. In Homo sapiens (Human), this protein is 5'-AMP-activated protein kinase catalytic subunit alpha-1.